Here is a 297-residue protein sequence, read N- to C-terminus: Tyrosine recombinase XerC (297 aa).

The Core-binding (CB) domain maps to 1–84; it reads MEEIQVTFLN…TLRTFYEFWM (84 aa). The region spanning 105 to 286 is the Tyr recombinase domain; the sequence is YLPQFFYEEE…SNQQLRKVYL (182 aa). Catalysis depends on residues R145, K169, H238, R241, and H264. Y273 (O-(3'-phospho-DNA)-tyrosine intermediate) is an active-site residue.

This sequence belongs to the 'phage' integrase family. XerC subfamily. Forms a cyclic heterotetrameric complex composed of two molecules of XerC and two molecules of XerD.

Its subcellular location is the cytoplasm. Its function is as follows. Site-specific tyrosine recombinase, which acts by catalyzing the cutting and rejoining of the recombining DNA molecules. The XerC-XerD complex is essential to convert dimers of the bacterial chromosome into monomers to permit their segregation at cell division. It also contributes to the segregational stability of plasmids. This Staphylococcus haemolyticus (strain JCSC1435) protein is Tyrosine recombinase XerC.